The primary structure comprises 251 residues: Putative ATP-binding protein Rv3427c in insertion sequence (251 aa).

108–115 is a binding site for ATP; it reads GPVGVGKT.

It belongs to the IS21/IS1162 putative ATP-binding protein family.

The chain is Putative ATP-binding protein Rv3427c in insertion sequence from Mycobacterium tuberculosis (strain ATCC 25618 / H37Rv).